A 142-amino-acid polypeptide reads, in one-letter code: Large-conductance mechanosensitive channel (142 aa).

Transmembrane regions (helical) follow at residues 14-34 (VMDL…VTSV), 38-58 (LVMP…NYFL), and 82-102 (GSFI…FLLV).

This sequence belongs to the MscL family. As to quaternary structure, homopentamer.

Its subcellular location is the cell inner membrane. Channel that opens in response to stretch forces in the membrane lipid bilayer. May participate in the regulation of osmotic pressure changes within the cell. In Sinorhizobium fredii (strain NBRC 101917 / NGR234), this protein is Large-conductance mechanosensitive channel.